The sequence spans 345 residues: Opioid-binding protein/cell adhesion molecule (345 aa).

A signal peptide spans Met-1 to Thr-27. 3 Ig-like C2-type domains span residues Pro-39–Ser-126, Pro-136–Thr-219, and Pro-223–Thr-310. Residues Asn-44, Asn-70, and Asn-140 are each glycosylated (N-linked (GlcNAc...) asparagine). A disulfide bridge links Cys-57 with Cys-115. 2 disulfide bridges follow: Cys-157–Cys-202 and Cys-244–Cys-296. Residues Asn-285, Asn-293, and Asn-306 are each glycosylated (N-linked (GlcNAc...) asparagine). Asn-322 is lipidated: GPI-anchor amidated asparagine. A propeptide spans Ser-323–Phe-345 (removed in mature form).

This sequence belongs to the immunoglobulin superfamily. IgLON family.

The protein localises to the cell membrane. Its function is as follows. Binds opioids in the presence of acidic lipids; probably involved in cell contact. The polypeptide is Opioid-binding protein/cell adhesion molecule (Opcml) (Rattus norvegicus (Rat)).